Here is a 95-residue protein sequence, read N- to C-terminus: Integration host factor subunit beta (95 aa).

This sequence belongs to the bacterial histone-like protein family. Heterodimer of an alpha and a beta chain.

Functionally, this protein is one of the two subunits of integration host factor, a specific DNA-binding protein that functions in genetic recombination as well as in transcriptional and translational control. The sequence is that of Integration host factor subunit beta from Klebsiella pneumoniae (strain 342).